Consider the following 262-residue polypeptide: Putative glycyl-radical enzyme activating enzyme HI_0520 (262 aa).

The Radical SAM core domain occupies 20 to 262 (VEGQGNRSSI…CGINKILTIL (243 aa)). Cys34, Cys38, and Cys41 together coordinate [4Fe-4S] cluster. Residues 40 to 42 (YCH), Gly81, and 130 to 132 (DLK) contribute to the S-adenosyl-L-methionine site.

This sequence belongs to the organic radical-activating enzymes family. [4Fe-4S] cluster serves as cofactor.

The enzyme catalyses glycyl-[protein] + reduced [flavodoxin] + S-adenosyl-L-methionine = glycin-2-yl radical-[protein] + semiquinone [flavodoxin] + 5'-deoxyadenosine + L-methionine + H(+). In Haemophilus influenzae (strain ATCC 51907 / DSM 11121 / KW20 / Rd), this protein is Putative glycyl-radical enzyme activating enzyme HI_0520.